The following is a 263-amino-acid chain: Glucosamine-6-phosphate deaminase (263 aa).

Asp-67 functions as the Proton acceptor; for enolization step in the catalytic mechanism. Residue Asn-136 is the For ring-opening step of the active site. The active-site Proton acceptor; for ring-opening step is His-138. The For ring-opening step role is filled by Glu-143.

This sequence belongs to the glucosamine/galactosamine-6-phosphate isomerase family. NagB subfamily. Homohexamer.

The catalysed reaction is alpha-D-glucosamine 6-phosphate + H2O = beta-D-fructose 6-phosphate + NH4(+). It functions in the pathway amino-sugar metabolism; N-acetylneuraminate degradation; D-fructose 6-phosphate from N-acetylneuraminate: step 5/5. Its function is as follows. Catalyzes the reversible isomerization-deamination of glucosamine 6-phosphate (GlcN6P) to form fructose 6-phosphate (Fru6P) and ammonium ion. The polypeptide is Glucosamine-6-phosphate deaminase (Cellvibrio japonicus (strain Ueda107) (Pseudomonas fluorescens subsp. cellulosa)).